The primary structure comprises 868 residues: Hopanoid transporter HpnN (868 aa).

A run of 12 helical transmembrane segments spans residues 16–36 (FAAFTVLIGVFLAVAAGFYTY), 273–293 (GAVVNGIGTVVVVLLILWMAL), 298–318 (IIFAVAANLVIGLSITTAVGL), 326–346 (LLSIAFAVLFVGLGVDFGIQF), 370–390 (YSAVPLSLAAMSTTAGFLSFL), 403–423 (IAGAGMAIAFFTSITVLPALL), 452–472 (IAIIVGTIGVALAGLPLLYFM), 710–730 (IVASFIQAGLWALLSISILLW), 740–760 (ALTLVPLLVAGAVTLEICVLI), 762–782 (LPLNFANIVALPLLLGVGVAF), 805–825 (AIFFSALTTATAFGSLWLSSH), and 834–854 (LLALSLLTTLGAVLLFQPALM). The region spanning 299–425 (IFAVAANLVI…ITVLPALLKL (127 aa)) is the SSD domain.

This sequence belongs to the resistance-nodulation-cell division (RND) (TC 2.A.6) family. MmpL subfamily.

Its subcellular location is the cell inner membrane. Essential for hopanoid transport from the cytoplasmic to the outer membrane. Required for the C(35) hopanoid, bacteriohopanetetrol, to remain localized to the mother cell type. The protein is Hopanoid transporter HpnN of Rhodopseudomonas palustris (strain TIE-1).